The sequence spans 186 residues: Casparian strip membrane protein 3 (186 aa).

Residues 1 to 26 (MTKSTYVELGEEKTSNQKGNMKRGVS) lie on the Cytoplasmic side of the membrane. The chain crosses the membrane as a helical span at residues 27–47 (ILDFILRLIAIVATLASAIAM). Residues 48 to 74 (GTTDESLPFFTQFVRFRANYDDLPTLR) are Extracellular-facing. A helical membrane pass occupies residues 75–95 (FFVVASAIVSGYLILSLPLSI). Residues 96–107 (LHIIRSSAGMTR) lie on the Cytoplasmic side of the membrane. Residues 108–128 (VIFIILDTVMLGLLTAGSSAA) form a helical membrane-spanning segment. The Extracellular segment spans residues 129-161 (ASIVYLAHKGNRKANWFAFCQQYNSFCERISGS). The helical transmembrane segment at 162 to 182 (LIGSFIAIPLFIMLILLSALV) threads the bilayer. Residues 183-186 (LSRR) are Cytoplasmic-facing.

The protein belongs to the Casparian strip membrane proteins (CASP) family. In terms of assembly, homodimer and heterodimers.

Its subcellular location is the cell membrane. Regulates membrane-cell wall junctions and localized cell wall deposition. Required for establishment of the Casparian strip membrane domain (CSD) and the subsequent formation of Casparian strips, a cell wall modification of the root endodermis that determines an apoplastic barrier between the intraorganismal apoplasm and the extraorganismal apoplasm and prevents lateral diffusion. The polypeptide is Casparian strip membrane protein 3 (Medicago truncatula (Barrel medic)).